Here is a 402-residue protein sequence, read N- to C-terminus: uncharacterized protein (402 aa).

12 helical membrane-spanning segments follow: residues 23–43 (IVSVVMFTFIGYLTIGIPLAV), 52–72 (LGYGSVLAGLVISLQYLATLL), 90–110 (VLYGMAGSAASGLFMLLSVAI), 121–141 (LLVGRLVLGAAESLVGSAAIG), 158–178 (WNGIASYGAIALGAPLGVLLV), 180–200 (WLGLWSMGASIVLLGALGFAL), 228–248 (GMGLALGAIGFGTIATFITLY), 255–275 (ANAVLCLSAFGGCFIGARLLF), 282–302 (LGGFRVAIICLGVESLGLLLL), 309–329 (WVGLAGAALTGFGFSLVFPAF), 351–371 (LFVDLSLGITGPLVGFVANLF), and 375–395 (SMFLFACLASLSGLALAIALH).

Belongs to the major facilitator superfamily. YhhS family.

It is found in the cell inner membrane. This is an uncharacterized protein from Pseudomonas aeruginosa (strain UCBPP-PA14).